Reading from the N-terminus, the 87-residue chain is NAD(P)H-quinone oxidoreductase subunit O (87 aa).

The segment covering 1–10 (MSEQTGKVDD) has biased composition (basic and acidic residues). The interval 1 to 26 (MSEQTGKVDDSQSPPKVQKKLRKGDL) is disordered.

Belongs to the complex I NdhO subunit family. As to quaternary structure, NDH-1 can be composed of about 15 different subunits; different subcomplexes with different compositions have been identified which probably have different functions.

The protein localises to the cellular thylakoid membrane. The enzyme catalyses a plastoquinone + NADH + (n+1) H(+)(in) = a plastoquinol + NAD(+) + n H(+)(out). The catalysed reaction is a plastoquinone + NADPH + (n+1) H(+)(in) = a plastoquinol + NADP(+) + n H(+)(out). Functionally, NDH-1 shuttles electrons from an unknown electron donor, via FMN and iron-sulfur (Fe-S) centers, to quinones in the respiratory and/or the photosynthetic chain. The immediate electron acceptor for the enzyme in this species is believed to be plastoquinone. Couples the redox reaction to proton translocation, and thus conserves the redox energy in a proton gradient. Cyanobacterial NDH-1 also plays a role in inorganic carbon-concentration. This is NAD(P)H-quinone oxidoreductase subunit O from Prochlorococcus marinus (strain NATL1A).